Reading from the N-terminus, the 138-residue chain is Lymphocyte antigen 6L (138 aa).

Positions 1–16 (MERLVLTLCTLPLAVA) are cleaved as a signal peptide. A glycan (N-linked (GlcNAc...) asparagine) is linked at N27. In terms of domain architecture, UPAR/Ly6 spans 28-122 (LSCYQCFKVS…TPQEGRWALR (95 aa)). 2 disulfide bridges follow: C30-C47 and C103-C108. The GPI-anchor amidated glycine moiety is linked to residue G117. The propeptide at 118-138 (RWALRGGLLLQVGLSLLRALL) is removed in mature form.

The protein resides in the cell membrane. This Homo sapiens (Human) protein is Lymphocyte antigen 6L.